Here is a 361-residue protein sequence, read N- to C-terminus: Dynein axonemal assembly factor 8 (361 aa).

Disordered stretches follow at residues 65 to 191 and 309 to 334; these read DPAG…ERRK and AQPG…RRPL. Polar residues predominate over residues 136–157; it reads TLNTSASQSPRQGPQGEATRSP. Ser142 and Ser144 each carry phosphoserine. Low complexity predominate over residues 321 to 334; sequence GSSSSSGHLGRRPL.

The protein resides in the dynein axonemal particle. Its subcellular location is the cytoplasm. In cyliated cells, dynein axonemal particle-specific protein required for deployment of ODA to the axoneme. Interacts with outer dynein arm (ODA) subunits. This Bos taurus (Bovine) protein is Dynein axonemal assembly factor 8 (DNAAF8).